We begin with the raw amino-acid sequence, 349 residues long: Soluble TNF receptor II (349 aa).

The first 19 residues, 1-19 (MRSVLYSYILFLSCIIING), serve as a signal peptide directing secretion. 2 TNFR-Cys repeats span residues 31-65 (KCKD…NTQC) and 67-108 (PCGS…NRIC). 6 disulfide bridges follow: cysteine 32–cysteine 43, cysteine 44–cysteine 57, cysteine 47–cysteine 65, cysteine 68–cysteine 83, cysteine 86–cysteine 100, and cysteine 90–cysteine 108. 5 N-linked (GlcNAc...) asparagine; by host glycosylation sites follow: asparagine 101, asparagine 190, asparagine 249, asparagine 277, and asparagine 313.

The protein belongs to the orthopoxvirus OPG002 family.

The protein resides in the secreted. In terms of biological role, inhibits host immune defense by binding to host TNF and various chemokines in the extracellular space. Binds host CC chemokines (beta chemokines) and CXC chemokines (alpha chemokines). This Monkeypox virus protein is Soluble TNF receptor II (OPG002).